Here is a 718-residue protein sequence, read N- to C-terminus: Origin of replication complex subunit 3 (718 aa).

A compositionally biased stretch (low complexity) spans 26–43; the sequence is GAAASSSSSSAPSLPSSG. The disordered stretch occupies residues 26–75; that stretch reads GAAASSSSSSAPSLPSSGRARRRIDVSGLASPNPKPGKRSRDDDAAEDDD. The Nuclear localization signal motif lies at 659 to 666; the sequence is IKRKPHTS.

Belongs to the ORC3 family. In terms of assembly, component of the origin recognition complex (ORC) composed of at least ORC1, ORC2, ORC3, ORC4, ORC5 and ORC6. ORC is regulated in a cell-cycle and development dependent manner. It is sequentially assembled at the exit from anaphase of mitosis and disassembled as cells enter S phase. As to expression, expressed at low levels in the shoot apical meristem (SAM), leaves, ears and roots (including root tips).

The protein localises to the nucleus. Component of the origin recognition complex (ORC) that binds origins of replication. DNA-binding is ATP-dependent. The specific DNA sequences that define origins of replication have not been identified yet. This is Origin of replication complex subunit 3 from Oryza sativa subsp. japonica (Rice).